A 2424-amino-acid polypeptide reads, in one-letter code: MARFGDEMPARYGGGGAGAAAGVVVGAAGGRGAGGSRQGGQPGAQRMYKQSMAQRARTMALYNPIPVRQNCLTVNRSLFLFSEDNVVRKYAKKITEWPPFEYMILATIIANCIVLALEQHLPDDDKTPMSERLDDTEPYFIGIFCFEAGIKIIALGFAFHKGSYLRNGWNVMDFVVVLTGILATVGTEFDLRTLRAVRVLRPLKLVSGIPSLQVVLKSIMKAMIPLLQIGLLLFFAILIFAIIGLEFYMGKFHTTCFEEGTDDIQGESPAPCGTEEPARTCPNGTRCQPYWEGPNNGITQFDNILFAVLTVFQCITMEGWTDLLYNSNDASGNTWNWLYFIPLIIIGSFFMLNLVLGVLSGEFAKERERVENRRAFLKLRRQQQIERELNGYMEWISKAEEVILAEDETDVEQRHPFDGALRRATIKKSKTDLLHPEEAEDQLADIASVGSPFARASIKSAKLENSSFFHKKERRMRFYIRRMVKTQAFYWTVLSLVALNTLCVAIVHYNQPEWLSDFLYYAEFIFLGLFMSEMFIKMYGLGTRPYFHSSFNCFDCGVIIGSIFEVIWAVIKPGTSFGISVLRALRLLRIFKVTKYWASLRNLVVSLLNSMKSIISLLFLLFLFIVVFALLGMQLFGGQFNFDEGTPPTNFDTFPAAIMTVFQILTGEDWNEVMYDGIKSQGGVQGGMVFSIYFIVLTLFGNYTLLNVFLAIAVDNLANAQELTKDEQEEEEAVNQKLALQKAKEVAEVSPLSAANMSIAMKEQQKNQKPAKSVWEQRTSEMRKQNLLASREALYSEMDPEERWKASYARHLRPDMKTHLDRPLVVDPQENRNNNTNKSRVAEPTVDQRLGQQRAEDFLRKQARHHDRARDPSAHAAAGLDARRPWAGSQEAELSREGPYGRESDHQAREGGLEPPGFWEGEAERGKAGDPHRRHAHRQGVGGSGGSRSGSPRTGTADGEPRRHRVHRRPGEDGPDDKAERRGRHREGSRPARSGEGEAEGPDGGGGGGGERRRRHRHGPPPAYDPDARRDDRERRHRRRKDTQGSGVPVSGPNLSTTRPIQQDLSRQEPPLAEDMDNLKNSRLATAEPVSPHENLSHAGLPQSPAKMGSSTDPAGPTPATAANPQNSTASRRTPNNPGNPSNPGPPKTPENSLIVTNPSTAQTNSAKTARKPDHTTVEIPPACPPPLNHTVVQVNKNANPDPLPKKEDEKKEEVDEGPGEDGPKPMPPYSSMFILSTTNPLRRLCHYILNLRYFEMCILMVIAMSSIALAAEDPVQPNAPRNNVLRYFDYVFTGVFTFEMVIKMIDLGLVLHQGAYFRDLWNILDFIVVSGALVAFAFTGNSKGKDINTIKSLRVLRVLRPLKTIKRLPKLKAVFDCVVNSLKNVFNILIVYMLFMFIFAVVAVQLFKGKFFHCTDESKEFEKDCRGKYLLYEKNEVKARDREWKKYEFHYDNVLWALLTLFTVSTGEGWPQVLKHSVDATFENQGPSPGYRMEMSIFYVVYFVVFPFFFVNIFVALIIITFQEQGDKMMEEYSLEKNERACIDFAISAKPLTRHMPQNKQSFQYRMWQFVVSPPFEYTIMAMIALNTIVLMMKFYGASVAYDNALKVFNIVFTSLFSLECLLKVLAFGILNYFRDAWNIFDFVTVLGSITDILVTEFGNNFINLSFLRLFRAARLIKLLRQGYTIRILLWTFVQSFKALPYVCLLIAMLFFIYAIIGMQVFGNIGIDMEDEDSDEDEFQITEHNNFRTFFQALMLLFRSATGEAWHNIMLSCLSGKPCDKNSGILTPECGNEFAYFYFVSFIFLCSFLMLNLFVAVIMDNFEYLTRDSSILGPHHLDEYVRVWAEYDPAAWGRMLYRDMYAMLRHMPPPLGLGKNCPARVAYKRLLRMDLPVADDNTVHFNSTLMALIRTALDIKIAKGGADKQQMDAELRKEMMAIWPNLSQKTLDLLVTPHKSTDLTVGKIYAAMMIMEYYRQSKAKKLQAMREEQNRTPLMFQRMEPPPDEGGAGQNALPSTQLDPAGGLMAHEDGLKDSPSWVTQRAQEMFQKTGTWSPERAPPADMADSQPKPQSVEMREMSQDGYSDSEHCLPMEGQARAASMPRLPAENQRRRGRPRGSDLSTICDTSPMKRSASVLGPKASRRLDDYSLERVPPEENQRHHPRRRERAHRTSERSLGRYTDVDTGLGTDLSMTTQSGDLPSREREQERGRPKDRKHRPHHHHHHHHHPGRGPGRVSPGVSARRRRRGPVARVRPARAPALAHARARARAPARLLPELRLRRARRPRPRQRRRPRRRRGGGGRALRRAPGPREPLAQDSPGRGPSVCLARAARPAGPQRLLPGPRTGQAPRARLPQKPARSVQRERRGLVLSPPPPPPGELAPRAHPARTPRPGPGDSRSRRGGRRWTASAGKGGGGPRASAPSP.

Residues 1–98 (MARFGDEMPA…KYAKKITEWP (98 aa)) lie on the Cytoplasmic side of the membrane. One copy of the I repeat lies at 85-363 (NVVRKYAKKI…LVLGVLSGEF (279 aa)). The chain crosses the membrane as a helical span at residues 99-117 (PFEYMILATIIANCIVLAL). Residues 118–135 (EQHLPDDDKTPMSERLDD) are Extracellular-facing. A helical transmembrane segment spans residues 136–155 (TEPYFIGIFCFEAGIKIIAL). Over 156–167 (GFAFHKGSYLRN) the chain is Cytoplasmic. The helical transmembrane segment at 168 to 185 (GWNVMDFVVVLTGILATV) threads the bilayer. The Extracellular segment spans residues 186-190 (GTEFD). The chain crosses the membrane as a helical span at residues 191–209 (LRTLRAVRVLRPLKLVSGI). At 210-228 (PSLQVVLKSIMKAMIPLLQ) the chain is on the cytoplasmic side. The chain crosses the membrane as a helical span at residues 229–248 (IGLLLFFAILIFAIIGLEFY). Residues 249–335 (MGKFHTTCFE…NSNDASGNTW (87 aa)) are Extracellular-facing. Asn-283 carries N-linked (GlcNAc...) asparagine glycosylation. Position 318 (Glu-318) interacts with Ca(2+). Residues 336 to 360 (NWLYFIPLIIIGSFFMLNLVLGVLS) form a helical membrane-spanning segment. Topologically, residues 361–487 (GEFAKERERV…FYIRRMVKTQ (127 aa)) are cytoplasmic. The segment at 383-400 (QQIERELNGYMEWISKAE) is binding to the beta subunit. Thr-409 bears the Phosphothreonine mark. Phosphoserine is present on residues Ser-448 and Ser-451. The II repeat unit spans residues 473–717 (ERRMRFYIRR…VFLAIAVDNL (245 aa)). A helical transmembrane segment spans residues 488 to 506 (AFYWTVLSLVALNTLCVAI). Residues 507–521 (VHYNQPEWLSDFLYY) lie on the Extracellular side of the membrane. The helical transmembrane segment at 522–541 (AEFIFLGLFMSEMFIKMYGL) threads the bilayer. Over 542 to 549 (GTRPYFHS) the chain is Cytoplasmic. A helical membrane pass occupies residues 550 to 568 (SFNCFDCGVIIGSIFEVIW). The Extracellular segment spans residues 569–578 (AVIKPGTSFG). A helical membrane pass occupies residues 579-597 (ISVLRALRLLRIFKVTKYW). Residues 598 to 616 (ASLRNLVVSLLNSMKSIIS) are Cytoplasmic-facing. The helical transmembrane segment at 617 to 636 (LLFLLFLFIVVFALLGMQLF) threads the bilayer. Over 637–689 (GGQFNFDEGTPPTNFDTFPAAIMTVFQILTGEDWNEVMYDGIKSQGGVQGGMV) the chain is Extracellular. A Ca(2+)-binding site is contributed by Glu-668. A helical transmembrane segment spans residues 690-714 (FSIYFIVLTLFGNYTLLNVFLAIAV). At 715–1253 (DNLANAQELT…RLCHYILNLR (539 aa)) the chain is on the cytoplasmic side. Ser-750, Ser-753, and Ser-790 each carry phosphoserine. The interval 819–1229 (HLDRPLVVDP…GEDGPKPMPP (411 aa)) is disordered. 3 stretches are compositionally biased toward basic and acidic residues: residues 893-912 (ELSREGPYGRESDHQAREGG), 922-931 (EAERGKAGDP), and 969-996 (RPGEDGPDDKAERRGRHREGSRPARSGE). The span at 1053-1065 (PNLSTTRPIQQDL) shows a compositional bias: polar residues. Residues Ser-1091 and Ser-1104 each carry the phosphoserine modification. Positions 1110 to 1140 (SSTDPAGPTPATAANPQNSTASRRTPNNPGN) are enriched in low complexity. The segment covering 1151-1168 (ENSLIVTNPSTAQTNSAK) has biased composition (polar residues). Basic and acidic residues predominate over residues 1204–1214 (LPKKEDEKKEE). Residues 1240-1523 (NPLRRLCHYI…IFVALIIITF (284 aa)) form an III repeat. A helical membrane pass occupies residues 1254–1272 (YFEMCILMVIAMSSIALAA). Topologically, residues 1273–1288 (EDPVQPNAPRNNVLRY) are extracellular. A helical membrane pass occupies residues 1289–1308 (FDYVFTGVFTFEMVIKMIDL). At 1309–1320 (GLVLHQGAYFRD) the chain is on the cytoplasmic side. A helical membrane pass occupies residues 1321-1339 (LWNILDFIVVSGALVAFAF). At 1340 to 1350 (TGNSKGKDINT) the chain is on the extracellular side. A helical membrane pass occupies residues 1351–1369 (IKSLRVLRVLRPLKTIKRL). The Cytoplasmic segment spans residues 1370-1388 (PKLKAVFDCVVNSLKNVFN). The chain crosses the membrane as a helical span at residues 1389–1408 (ILIVYMLFMFIFAVVAVQLF). Over 1409–1495 (KGKFFHCTDE…QGPSPGYRME (87 aa)) the chain is Extracellular. Position 1469 (Glu-1469) interacts with Ca(2+). A helical transmembrane segment spans residues 1496 to 1520 (MSIFYVVYFVVFPFFFVNIFVALII). Residues 1521–1575 (ITFQEQGDKMMEEYSLEKNERACIDFAISAKPLTRHMPQNKQSFQYRMWQFVVSP) are Cytoplasmic-facing. An IV repeat occupies 1560–1823 (NKQSFQYRMW…LFVAVIMDNF (264 aa)). A helical transmembrane segment spans residues 1576-1604 (PFEYTIMAMIALNTIVLMMKFYGASVAYD). Topologically, residues 1605–1609 (NALKV) are extracellular. The chain crosses the membrane as a helical span at residues 1610–1629 (FNIVFTSLFSLECLLKVLAF). Residues 1630 to 1637 (GILNYFRD) lie on the Cytoplasmic side of the membrane. The chain crosses the membrane as a helical span at residues 1638–1656 (AWNIFDFVTVLGSITDILV). Residues 1657-1665 (TEFGNNFIN) are Extracellular-facing. Asn-1665 carries N-linked (GlcNAc...) asparagine glycosylation. The chain crosses the membrane as a helical span at residues 1666–1684 (LSFLRLFRAARLIKLLRQG). Residues 1685–1703 (YTIRILLWTFVQSFKALPY) are Cytoplasmic-facing. A helical membrane pass occupies residues 1704-1723 (VCLLIAMLFFIYAIIGMQVF). The Extracellular segment spans residues 1724–1795 (GNIGIDMEDE…ILTPECGNEF (72 aa)). Residues 1796–1820 (AYFYFVSFIFLCSFLMLNLFVAVIM) form a helical membrane-spanning segment. Over 1821-2424 (DNFEYLTRDS…GGPRASAPSP (604 aa)) the chain is Cytoplasmic. Thr-1993 carries the phosphothreonine modification. The disordered stretch occupies residues 1997-2424 (FQRMEPPPDE…GGPRASAPSP (428 aa)). Over residues 2037–2053 (SWVTQRAQEMFQKTGTW) the composition is skewed to polar residues. Residues Ser-2054, Ser-2072, Ser-2084, Ser-2086, Ser-2127, and Ser-2148 each carry the phosphoserine modification. The span at 2074 to 2090 (EMREMSQDGYSDSEHCL) shows a compositional bias: basic and acidic residues. 2 stretches are compositionally biased toward basic and acidic residues: residues 2142–2159 (RRLDDYSLERVPPEENQR) and 2200–2210 (PSREREQERGR). The segment covering 2211–2229 (PKDRKHRPHHHHHHHHHPG) has biased composition (basic residues). Residues 2249 to 2262 (VARVRPARAPALAH) show a composition bias toward low complexity. Over residues 2280 to 2305 (RRARRPRPRQRRRPRRRRGGGGRALR) the composition is skewed to basic residues.

Belongs to the calcium channel alpha-1 subunit (TC 1.A.1.11) family. CACNA1A subfamily. Voltage-dependent calcium channels are multisubunit complexes, consisting of alpha-1, alpha-2, beta and delta subunits in a 1:1:1:1 ratio. The channel activity is directed by the pore-forming and voltage-sensitive alpha-1 subunit. In many cases, this subunit is sufficient to generate voltage-sensitive calcium channel activity. The auxiliary subunits beta and alpha-2/delta linked by a disulfide bridge regulate the channel activity. Interacts with CABP1. Interacts with the spider omega-agatoxin-IVA (AC P30288). Interacts with TSPOAP1. As to expression, brain specific. Purkinje cells contain predominantly P-type VSCC, the Q-type being a prominent calcium current in cerebellar granule cells.

The protein localises to the cell membrane. It carries out the reaction Ca(2+)(in) = Ca(2+)(out). In terms of biological role, voltage-sensitive calcium channels (VSCC) mediate the entry of calcium ions into excitable cells and are also involved in a variety of calcium-dependent processes, including muscle contraction, hormone or neurotransmitter release, gene expression, cell motility, cell division and cell death. The isoform alpha-1A gives rise to P and/or Q-type calcium currents. P/Q-type calcium channels belong to the 'high-voltage activated' (HVA) group and are specifically blocked by the spider omega-agatoxin-IVA (AC P54282). They are however insensitive to dihydropyridines (DHP). This Oryctolagus cuniculus (Rabbit) protein is Voltage-dependent P/Q-type calcium channel subunit alpha-1A (CACNA1A).